Here is a 258-residue protein sequence, read N- to C-terminus: Aquaglyceroporin (258 aa).

Residues 1 to 16 (MKVTFGNEYIKNFLGE) lie on the Cytoplasmic side of the membrane. The helical transmembrane segment at 17-37 (FIGTFVLMFLGEGTTANHFAV) threads the bilayer. The Extracellular portion of the chain corresponds to 38–45 (PIKNDWLR). Residues 46 to 66 (LCIGWGLGVFFGILISAKLSG) form a helical membrane-spanning segment. Residues Ala67 and Asn70 each coordinate glycerol. The Cytoplasmic portion of the chain corresponds to 67-87 (AHLNLAVTVGLSTIKKFNYKQ). A helical membrane pass occupies residues 88–108 (IPLYFAGQLLGALSATASVYG). Over 109 to 133 (LYYGFVSDQTIPKFSWETGKHANVH) the chain is Extracellular. Residues 134-154 (IASAFMHEFILTGILLLIILS) form a helical membrane-spanning segment. Residues 155-171 (VTDENICGKFHVLKVSS) are Cytoplasmic-facing. A helical transmembrane segment spans residues 172-192 (IVGLAIICIGISFGGNTGFAL). 4 residues coordinate glycerol: Gly189, Phe190, Asn193, and Arg196. At 193-217 (NPSRDLGARILSAIAYGFEAFTRDK) the chain is on the extracellular side. The helical transmembrane segment at 218–238 (CYFWIPLIAPIIGSIIFCQIY) threads the bilayer. Residues 239–258 (DKIVAPLVVISEHDKGALEI) are Cytoplasmic-facing.

The protein belongs to the MIP/aquaporin (TC 1.A.8) family.

Its subcellular location is the cell membrane. It carries out the reaction H2O(in) = H2O(out). It catalyses the reaction glycerol(in) = glycerol(out). The catalysed reaction is urea(in) = urea(out). Functionally, mediates water and glycerol transport across the cell membrane. Permeable to urea. Required for efficient progression of parasites through the liver stages. The polypeptide is Aquaglyceroporin (Plasmodium berghei (strain Anka)).